The sequence spans 326 residues: Adenosine receptor A1 (326 aa).

Over 1–10 (MPPAISAFQA) the chain is Extracellular. The chain crosses the membrane as a helical span at residues 11–33 (AYIGIEVLIALVSVPGNVLVIWA). Residues 34–46 (VKVNQALRDATFC) lie on the Cytoplasmic side of the membrane. The helical transmembrane segment at 47 to 69 (FIVSLAVADVAVGALVIPLAILI) threads the bilayer. Topologically, residues 70–80 (NIGPRTYFHTC) are extracellular. C80 and C169 form a disulfide bridge. A helical transmembrane segment spans residues 81 to 102 (LMVACPVLILTQSSILALLAIA). Residues 103 to 123 (VDRYLRVKIPLRYKTVVTPRR) are Cytoplasmic-facing. The chain crosses the membrane as a helical span at residues 124-146 (AAVAIAGCWILSFVVGLTPLFGW). Over 147 to 176 (NRLGEAQRAWAANGSGGEPVIKCEFEKVIS) the chain is Extracellular. N159 carries an N-linked (GlcNAc...) asparagine glycan. Residues 177–201 (MEYMVYFNFFVWVLPPLLLMVLIYL) form a helical membrane-spanning segment. The Cytoplasmic segment spans residues 202–235 (EVFYLIRRQLGKKVSASSGDPQKYYGKELKIAKS). Residues 236–259 (LALILFLFALSWLPLHILNCITLF) traverse the membrane as a helical segment. At 260–267 (CPSCRKPS) the chain is on the extracellular side. Residues 268–292 (ILMYIAIFLTHGNSAMNPIVYAFRI) traverse the membrane as a helical segment. Residues 293 to 326 (QKFRVTFLKIWNDHFRCQPTPPVDEDPPEEAPHD) lie on the Cytoplasmic side of the membrane. C309 carries S-palmitoyl cysteine lipidation.

The protein belongs to the G-protein coupled receptor 1 family.

Its subcellular location is the cell membrane. Its function is as follows. Receptor for adenosine. The activity of this receptor is mediated by G proteins which inhibit adenylyl cyclase. This Canis lupus familiaris (Dog) protein is Adenosine receptor A1 (ADORA1).